The following is a 585-amino-acid chain: Nucleoporin p58/p45 (585 aa).

Tandem repeats lie at residues 7 to 8, 30 to 31, 42 to 43, 61 to 62, and 66 to 67. Residues 7-565 form a 14 X 2 AA repeats of F-G region; that stretch reads FGSGTLGSTT…VSNPASAGFG (559 aa). The disordered stretch occupies residues 194-232; that stretch reads TSAASSEGLGGIDFSTSSDKKSDKTGTRPEDSKALKDEN. A compositionally biased stretch (basic and acidic residues) spans 211–232; sequence SDKKSDKTGTRPEDSKALKDEN. 2 coiled-coil regions span residues 242–262 and 300–367; these read ENLQ…SRMS and ETAQ…SHIT. Residue Thr-317 is modified to Phosphothreonine. 9 tandem repeats follow at residues 474-475, 478-479, 499-500, 505-506, 515-516, 517-518, 531-532, 554-555, and 564-565. The interval 563-585 is disordered; sequence GFGTGGQLLQLKRPPAGNKRGKR.

It belongs to the NUP58 family. In terms of assembly, component of the p62 complex, a complex composed of NUP62, NUP54, and isoform p58 and isoform p45 of NUP58. Isoform p58 interacts with NUTF2. Isoform p58 interacts with SRP1-alpha and Importin p97 proteins when they are together, but not with SRP1-alpha protein alone. Post-translationally, O-glycosylated. Expressed in liver.

It is found in the nucleus. It localises to the nuclear pore complex. The protein localises to the nucleus membrane. Component of the nuclear pore complex, a complex required for the trafficking across the nuclear membrane. The chain is Nucleoporin p58/p45 from Rattus norvegicus (Rat).